Consider the following 558-residue polypeptide: Potassium-transporting ATPase potassium-binding subunit 1 (558 aa).

Helical transmembrane passes span 1-21 (MEII…SGYL), 66-86 (FNGF…WLFL), 127-147 (MIVM…VCIA), 166-186 (IVRF…ILLM), 245-265 (IWSN…MLFL), 281-301 (ALIL…LTMW), 327-347 (FGAG…TGSV), 354-374 (LTPL…VFGG), 377-397 (VGLM…SLMV), 416-436 (IVLV…LAFM), 482-502 (ISTG…QLMI), and 531-551 (IVFI…LGPI).

This sequence belongs to the KdpA family. As to quaternary structure, the system is composed of three essential subunits: KdpA, KdpB and KdpC.

The protein localises to the cell membrane. Its function is as follows. Part of the high-affinity ATP-driven potassium transport (or Kdp) system, which catalyzes the hydrolysis of ATP coupled with the electrogenic transport of potassium into the cytoplasm. This subunit binds the extracellular potassium ions and delivers the ions to the membrane domain of KdpB through an intramembrane tunnel. This Staphylococcus aureus (strain MRSA252) protein is Potassium-transporting ATPase potassium-binding subunit 1.